A 91-amino-acid chain; its full sequence is C-C motif chemokine 5 (91 aa).

The first 23 residues, 1 to 23 (MKVFAAALAVILATATFCTPASA), serve as a signal peptide directing secretion. 2 cysteine pairs are disulfide-bonded: C33–C57 and C34–C73.

Belongs to the intercrine beta (chemokine CC) family.

It localises to the secreted. In terms of biological role, chemoattractant for blood monocytes, memory T-helper cells and eosinophils. Causes the release of histamine from basophils and activates eosinophils. May activate several chemokine receptors including CCR1, CCR3, CCR4 and CCR5. May also be an agonist of the G protein-coupled receptor GPR75. Together with GPR75, may play a role in neuron survival through activation of a downstream signaling pathway involving the PI3, Akt and MAP kinases. By activating GPR75 may also play a role in insulin secretion by islet cells. This is C-C motif chemokine 5 (CCL5) from Equus caballus (Horse).